The chain runs to 924 residues: Isoleucine--tRNA ligase (924 aa).

A 'HIGH' region motif is present at residues 57–67; that stretch reads PYANGDIHMGH. Glutamate 552 contributes to the L-isoleucyl-5'-AMP binding site. A 'KMSKS' region motif is present at residues 593–597; sequence KMSKS. Lysine 596 contributes to the ATP binding site. Zn(2+) is bound by residues cysteine 891, cysteine 894, cysteine 911, and cysteine 914.

Belongs to the class-I aminoacyl-tRNA synthetase family. IleS type 1 subfamily. Monomer. Zn(2+) is required as a cofactor.

Its subcellular location is the cytoplasm. The catalysed reaction is tRNA(Ile) + L-isoleucine + ATP = L-isoleucyl-tRNA(Ile) + AMP + diphosphate. Functionally, catalyzes the attachment of isoleucine to tRNA(Ile). As IleRS can inadvertently accommodate and process structurally similar amino acids such as valine, to avoid such errors it has two additional distinct tRNA(Ile)-dependent editing activities. One activity is designated as 'pretransfer' editing and involves the hydrolysis of activated Val-AMP. The other activity is designated 'posttransfer' editing and involves deacylation of mischarged Val-tRNA(Ile). The chain is Isoleucine--tRNA ligase from Geobacillus kaustophilus (strain HTA426).